The sequence spans 442 residues: Elongation factor 1-gamma (442 aa).

In terms of domain architecture, GST N-terminal spans 2 to 87; that stretch reads AAGTLYTYPE…FLSNDALRGS (86 aa). Residues 88 to 216 enclose the GST C-terminal domain; the sequence is TPQASAQVLQ…VKLCEKMAQF (129 aa). Composition is skewed to basic and acidic residues over residues 224–242 and 249–263; these read MQPK…KEGG and QEKK…KAAP. A disordered region spans residues 224–273; that stretch reads MQPKKEAPAKKEKAGKEGGKQQQPQQEKKEKKKEEKKAAPAEEEMDECEA. Residues 281 to 442 enclose the EF-1-gamma C-terminal domain; that stretch reads AKDPYAHLPK…KSFNQGKIFK (162 aa).

In terms of assembly, EF-1 is composed of four subunits: alpha, beta, delta, and gamma.

Functionally, probably plays a role in anchoring the complex to other cellular components. The polypeptide is Elongation factor 1-gamma (eef1g) (Carassius auratus (Goldfish)).